We begin with the raw amino-acid sequence, 122 residues long: Lycotoxin-Pa4a (122 aa).

An N-terminal signal peptide occupies residues 1-20 (MKLGIFFSVFFLAMIHSCLS). Positions 21–47 (ETNEDKNLESYFREDDLKALSFGEYAR) are excised as a propeptide. Cystine bridges form between Cys58–Cys73, Cys65–Cys82, Cys72–Cys100, and Cys84–Cys98.

It belongs to the neurotoxin 19 (CSTX) family. Expressed by the venom gland.

The protein localises to the secreted. It localises to the target cell membrane. Potent antibacterial peptide with anti-inflammatory properties. Inhibits both Gram-negative and Gram-positive bacteria by disrupting both the outer membrane and the cytosolic membrane of bacteria. Also downregulates the expression of pro-inflammatory mediators (cyclooxygenase-2 (PTGS2/COX2), nitric oxide-induced synthase (NOS2), IL-1 beta (IL1B), TNF-alpha (TNF)) and upregulates the level of anti-inflammatory cytokine (IL10) by inactivating mitogen-activated protein kinase signaling in a lipopolysaccharide-stimulated murine macrophage cell line. This is Lycotoxin-Pa4a from Pardosa astrigera (Wolf spider).